Reading from the N-terminus, the 82-residue chain is ATP synthase subunit c (82 aa).

The next 2 helical transmembrane spans lie at 7 to 27 (AASV…PGIG) and 57 to 77 (LAFM…LLFA).

Belongs to the ATPase C chain family. In terms of assembly, F-type ATPases have 2 components, F(1) - the catalytic core - and F(0) - the membrane proton channel. F(1) has five subunits: alpha(3), beta(3), gamma(1), delta(1), epsilon(1). F(0) has four main subunits: a(1), b(1), b'(1) and c(10-14). The alpha and beta chains form an alternating ring which encloses part of the gamma chain. F(1) is attached to F(0) by a central stalk formed by the gamma and epsilon chains, while a peripheral stalk is formed by the delta, b and b' chains.

The protein localises to the cellular thylakoid membrane. F(1)F(0) ATP synthase produces ATP from ADP in the presence of a proton or sodium gradient. F-type ATPases consist of two structural domains, F(1) containing the extramembraneous catalytic core and F(0) containing the membrane proton channel, linked together by a central stalk and a peripheral stalk. During catalysis, ATP synthesis in the catalytic domain of F(1) is coupled via a rotary mechanism of the central stalk subunits to proton translocation. Its function is as follows. Key component of the F(0) channel; it plays a direct role in translocation across the membrane. A homomeric c-ring of between 10-14 subunits forms the central stalk rotor element with the F(1) delta and epsilon subunits. The protein is ATP synthase subunit c of Synechococcus sp. (strain WH7803).